The chain runs to 333 residues: 1D-myo-inositol 2-acetamido-2-deoxy-alpha-D-glucopyranoside deacetylase (333 aa).

Residues H18, D21, and H165 each coordinate Zn(2+).

Belongs to the MshB deacetylase family. It depends on Zn(2+) as a cofactor.

The catalysed reaction is 1D-myo-inositol 2-acetamido-2-deoxy-alpha-D-glucopyranoside + H2O = 1D-myo-inositol 2-amino-2-deoxy-alpha-D-glucopyranoside + acetate. In terms of biological role, catalyzes the deacetylation of 1D-myo-inositol 2-acetamido-2-deoxy-alpha-D-glucopyranoside (GlcNAc-Ins) in the mycothiol biosynthesis pathway. The protein is 1D-myo-inositol 2-acetamido-2-deoxy-alpha-D-glucopyranoside deacetylase of Corynebacterium jeikeium (strain K411).